The chain runs to 579 residues: DELLA protein RGA2 (579 aa).

The tract at residues 1-31 (MKRDLHQFQGPPDTRFPNHGTANTGSSSKDK) is disordered. Positions 45 to 49 (DELLA) match the DELLA motif motif. 2 stretches are compositionally biased toward low complexity: residues 149–162 (SSSS…NSQS) and 174–183 (SLVTGTTVTT). The tract at residues 149-183 (SSSSSNQAGDNSQSTKRLKSCSSPDSLVTGTTVTT) is disordered. In terms of domain architecture, GRAS spans 205-574 (VDSQENGVRL…RPLITTSAWK (370 aa)). The interval 212–266 (VRLVHALMACAEAIQNNDLSIAEALVKQIGFLAVSQAGAMRKVATYFAEALARRI) is leucine repeat I (LRI). A VHIID region spans residues 285–350 (QMHFYETCPY…GGPPVFRLTG (66 aa)). Residues 316–320 (VHVID) carry the VHIID motif. The segment at 364 to 396 (EVGCKLAQLAEAIHVEFEYRGFVANSLADLDAS) is leucine repeat II (LRII). Residues 408–495 (VAVNSVFELH…EVYLGKQICN (88 aa)) are PFYRE. The LXXLL motif signature appears at 416-420 (LHKLL). The SAW stretch occupies residues 498-574 (ACEGPDRVER…RPLITTSAWK (77 aa)).

It belongs to the GRAS family. DELLA subfamily. In terms of processing, phosphorylated. Ubiquitinated. Upon GA application it is ubiquitinated, leading to its subsequent degradation.

It is found in the nucleus. Its function is as follows. Probable transcriptional regulator that acts as a repressor of the gibberellin (GA) signaling pathway. Probably acts by participating in large multiprotein complexes that represses transcription of GA-inducible genes. Upon GA application, it is degraded by the proteasome, allowing the GA signaling pathway. The chain is DELLA protein RGA2 (RGA2) from Brassica campestris (Field mustard).